Consider the following 215-residue polypeptide: Mediator of RNA polymerase II transcription subunit 20 (215 aa).

The protein belongs to the Mediator complex subunit 20 family. As to quaternary structure, component of the Mediator complex.

It localises to the nucleus. Component of the Mediator complex, a coactivator involved in the regulated transcription of nearly all RNA polymerase II-dependent genes. Mediator functions as a bridge to convey information from gene-specific regulatory proteins to the basal RNA polymerase II transcription machinery. Mediator is recruited to promoters by direct interactions with regulatory proteins and serves as a scaffold for the assembly of a functional preinitiation complex with RNA polymerase II and the general transcription factors. The protein is Mediator of RNA polymerase II transcription subunit 20 (SRB2) of Candida glabrata (strain ATCC 2001 / BCRC 20586 / JCM 3761 / NBRC 0622 / NRRL Y-65 / CBS 138) (Yeast).